The chain runs to 704 residues: DNA ligase (704 aa).

Residues 43–47 (DADYD), 92–93 (SL), and glutamate 124 each bind NAD(+). Residue lysine 126 is the N6-AMP-lysine intermediate of the active site. The NAD(+) site is built by arginine 147, glutamate 182, lysine 298, and lysine 322. Zn(2+) is bound by residues cysteine 427, cysteine 430, cysteine 445, and cysteine 451. The 80-residue stretch at 625-704 (PVASPVAGRI…DGWLRLIGDA (80 aa)) folds into the BRCT domain.

Belongs to the NAD-dependent DNA ligase family. LigA subfamily. Requires Mg(2+) as cofactor. It depends on Mn(2+) as a cofactor.

It carries out the reaction NAD(+) + (deoxyribonucleotide)n-3'-hydroxyl + 5'-phospho-(deoxyribonucleotide)m = (deoxyribonucleotide)n+m + AMP + beta-nicotinamide D-nucleotide.. Its function is as follows. DNA ligase that catalyzes the formation of phosphodiester linkages between 5'-phosphoryl and 3'-hydroxyl groups in double-stranded DNA using NAD as a coenzyme and as the energy source for the reaction. It is essential for DNA replication and repair of damaged DNA. This is DNA ligase from Cereibacter sphaeroides (strain KD131 / KCTC 12085) (Rhodobacter sphaeroides).